Reading from the N-terminus, the 207-residue chain is Small ribosomal subunit protein uS4c (207 aa).

Positions 22-51 (TQKNCTRDFPPGQHGPKKKGGGNQKTKESQ) are disordered. The 62-residue stretch at 97 to 158 (MRLDTIIFRL…NSQNFVKNLL (62 aa)) folds into the S4 RNA-binding domain.

This sequence belongs to the universal ribosomal protein uS4 family. As to quaternary structure, part of the 30S ribosomal subunit. Contacts protein S5. The interaction surface between S4 and S5 is involved in control of translational fidelity.

The protein resides in the plastid. The protein localises to the chloroplast. One of the primary rRNA binding proteins, it binds directly to 16S rRNA where it nucleates assembly of the body of the 30S subunit. Functionally, with S5 and S12 plays an important role in translational accuracy. The polypeptide is Small ribosomal subunit protein uS4c (rps4) (Chlorella vulgaris (Green alga)).